Consider the following 240-residue polypeptide: Ribosomal RNA large subunit methyltransferase E (240 aa).

The tract at residues 1 to 28 (MSSSPRSPDARPLKVRVKSARTRSSSSQ) is disordered. Positions 80, 82, 103, 119, and 143 each coordinate S-adenosyl-L-methionine. The active-site Proton acceptor is Lys-183.

This sequence belongs to the class I-like SAM-binding methyltransferase superfamily. RNA methyltransferase RlmE family.

Its subcellular location is the cytoplasm. It catalyses the reaction uridine(2552) in 23S rRNA + S-adenosyl-L-methionine = 2'-O-methyluridine(2552) in 23S rRNA + S-adenosyl-L-homocysteine + H(+). Its function is as follows. Specifically methylates the uridine in position 2552 of 23S rRNA at the 2'-O position of the ribose in the fully assembled 50S ribosomal subunit. The protein is Ribosomal RNA large subunit methyltransferase E of Azorhizobium caulinodans (strain ATCC 43989 / DSM 5975 / JCM 20966 / LMG 6465 / NBRC 14845 / NCIMB 13405 / ORS 571).